Here is a 388-residue protein sequence, read N- to C-terminus: G2/mitotic-specific cyclin-B (388 aa).

Belongs to the cyclin family. Cyclin AB subfamily. In terms of assembly, interacts with the CDK1 protein kinase to form a serine/threonine kinase holoenzyme complex also known as maturation promoting factor (MPF). The cyclin subunit imparts substrate specificity to the complex.

Its function is as follows. Essential for the control of the cell cycle at the G2/M (mitosis) transition. The chain is G2/mitotic-specific cyclin-B from Marthasterias glacialis (Spiny starfish).